Here is a 229-residue protein sequence, read N- to C-terminus: Lantibiotic transport ATP-binding protein SrtF (229 aa).

Positions 2–225 constitute an ABC transporter domain; sequence LKIQNLKKSY…EELFNNQILF (224 aa). Residue 34–41 coordinates ATP; it reads GPNGAGKS.

Belongs to the ABC transporter superfamily.

In terms of biological role, implicated in the export process of the lantibiotic SrtA. The polypeptide is Lantibiotic transport ATP-binding protein SrtF (srtF) (Streptococcus pyogenes serotype M1).